The following is a 35-amino-acid chain: Tau-theraphotoxin-Pc1b (35 aa).

3 cysteine pairs are disulfide-bonded: cysteine 3–cysteine 17, cysteine 10–cysteine 22, and cysteine 16–cysteine 29. Residue phenylalanine 35 is modified to Phenylalanine amide.

The protein belongs to the neurotoxin 10 (Hwtx-1) family. 62 (Vatx) subfamily. Expressed by the venom gland.

It localises to the secreted. In terms of biological role, selectively activates the mammalian capsaicin receptor TRPV1, a non-selective cation channel expressed by sensory neurons of the pain pathway. Is more potent than VaTx1, but less potent than VaTx3. Interacts with distinct regions of the channel than capsaicin, since it only acts on the extracellular face of the channel, and capsaicin binds to the cytosolic side. Also activates avian TRPV1, which is insensitive to capsaicin. Produce weak inhibition on potassium channels Kv2.1/KCNB1. The protein is Tau-theraphotoxin-Pc1b of Psalmopoeus cambridgei (Trinidad chevron tarantula).